The chain runs to 188 residues: Adenine phosphoribosyltransferase (188 aa).

The protein belongs to the purine/pyrimidine phosphoribosyltransferase family. Homodimer.

The protein resides in the cytoplasm. It carries out the reaction AMP + diphosphate = 5-phospho-alpha-D-ribose 1-diphosphate + adenine. It participates in purine metabolism; AMP biosynthesis via salvage pathway; AMP from adenine: step 1/1. Catalyzes a salvage reaction resulting in the formation of AMP, that is energically less costly than de novo synthesis. This Burkholderia lata (strain ATCC 17760 / DSM 23089 / LMG 22485 / NCIMB 9086 / R18194 / 383) protein is Adenine phosphoribosyltransferase.